A 140-amino-acid polypeptide reads, in one-letter code: Small ribosomal subunit protein eS12 (140 aa).

The protein belongs to the eukaryotic ribosomal protein eS12 family. As to quaternary structure, part of the small subunit (SSU) processome, composed of more than 70 proteins and the RNA chaperone small nucleolar RNA (snoRNA) U3. Subunit of the 40S ribosomal complex.

It localises to the nucleus. The protein localises to the nucleolus. In terms of biological role, part of the small subunit (SSU) processome, first precursor of the small eukaryotic ribosomal subunit. During the assembly of the SSU processome in the nucleolus, many ribosome biogenesis factors, an RNA chaperone and ribosomal proteins associate with the nascent pre-rRNA and work in concert to generate RNA folding, modifications, rearrangements and cleavage as well as targeted degradation of pre-ribosomal RNA by the RNA exosome. Subunit of the 40S ribosomal complex. Involved in cold-warm shock-induced translocation of the RNA exosome components from the nucleolus to nucleoplasm. This chain is Small ribosomal subunit protein eS12 (rps-12), found in Caenorhabditis elegans.